A 196-amino-acid chain; its full sequence is Protein GrpE (196 aa).

Residues 1–41 (MSSKEQKTPEGQAPEEIITEQHDDVEAVEPEVSAEQVDPRD) are disordered.

The protein belongs to the GrpE family. Homodimer.

The protein localises to the cytoplasm. Functionally, participates actively in the response to hyperosmotic and heat shock by preventing the aggregation of stress-denatured proteins, in association with DnaK and GrpE. It is the nucleotide exchange factor for DnaK and may function as a thermosensor. Unfolded proteins bind initially to DnaJ; upon interaction with the DnaJ-bound protein, DnaK hydrolyzes its bound ATP, resulting in the formation of a stable complex. GrpE releases ADP from DnaK; ATP binding to DnaK triggers the release of the substrate protein, thus completing the reaction cycle. Several rounds of ATP-dependent interactions between DnaJ, DnaK and GrpE are required for fully efficient folding. This chain is Protein GrpE, found in Klebsiella pneumoniae subsp. pneumoniae (strain ATCC 700721 / MGH 78578).